A 465-amino-acid polypeptide reads, in one-letter code: 3-isopropylmalate dehydratase large subunit (465 aa).

Residues Cys-347, Cys-407, and Cys-410 each coordinate [4Fe-4S] cluster. The interval 416 to 443 (DTLRPGERSASTSNRNFEGRQGPGGRTH) is disordered.

It belongs to the aconitase/IPM isomerase family. LeuC type 1 subfamily. In terms of assembly, heterodimer of LeuC and LeuD. The cofactor is [4Fe-4S] cluster.

The catalysed reaction is (2R,3S)-3-isopropylmalate = (2S)-2-isopropylmalate. Its pathway is amino-acid biosynthesis; L-leucine biosynthesis; L-leucine from 3-methyl-2-oxobutanoate: step 2/4. Functionally, catalyzes the isomerization between 2-isopropylmalate and 3-isopropylmalate, via the formation of 2-isopropylmaleate. The polypeptide is 3-isopropylmalate dehydratase large subunit (Frankia casuarinae (strain DSM 45818 / CECT 9043 / HFP020203 / CcI3)).